An 82-amino-acid chain; its full sequence is UPF0437 protein in nifX-nifW intergenic region (82 aa).

This sequence belongs to the UPF0437 family.

The sequence is that of UPF0437 protein in nifX-nifW intergenic region from Frankia alni.